Consider the following 282-residue polypeptide: NADPH-dependent 7-cyano-7-deazaguanine reductase (282 aa).

88–90 contacts substrate; the sequence is IES. 90 to 91 is a binding site for NADPH; sequence SK. The active-site Thioimide intermediate is cysteine 190. Residue aspartate 197 is the Proton donor of the active site. Position 229-230 (229-230) interacts with substrate; that stretch reads HE. 258–259 is an NADPH binding site; sequence RG.

This sequence belongs to the GTP cyclohydrolase I family. QueF type 2 subfamily. As to quaternary structure, homodimer.

It is found in the cytoplasm. It catalyses the reaction 7-aminomethyl-7-carbaguanine + 2 NADP(+) = 7-cyano-7-deazaguanine + 2 NADPH + 3 H(+). The protein operates within tRNA modification; tRNA-queuosine biosynthesis. Functionally, catalyzes the NADPH-dependent reduction of 7-cyano-7-deazaguanine (preQ0) to 7-aminomethyl-7-deazaguanine (preQ1). The chain is NADPH-dependent 7-cyano-7-deazaguanine reductase from Salmonella paratyphi A (strain ATCC 9150 / SARB42).